A 218-amino-acid polypeptide reads, in one-letter code: MKEVAKPLQERFFIPHEIKVMGRWSTEDVEVKDPSLKPYINLEPRLLPHTHGRHAKKHFGKANVHIVERLINKVMRSGGSHYKVAGHFMRREHRSLNSKKVRAYEVVKEAFKIIEKRTGKNPIQVLVWAIENAAPREDTTSVMFGGIRYHVAVDISPLRRLDVALRNIALGASAKCYRTKMSFAEALAEEIILAANKDPKSYAYSKKLEIERIAESSR.

The protein belongs to the universal ribosomal protein uS7 family. As to quaternary structure, part of the 30S ribosomal subunit.

One of the primary rRNA binding proteins, it binds directly to 16S rRNA where it nucleates assembly of the head domain of the 30S subunit. Is located at the subunit interface close to the decoding center. This chain is Small ribosomal subunit protein uS7 (rps7), found in Pyrococcus horikoshii (strain ATCC 700860 / DSM 12428 / JCM 9974 / NBRC 100139 / OT-3).